The following is an 87-amino-acid chain: Conotoxin Ca6.2 (87 aa).

The N-terminal stretch at 1–19 is a signal peptide; the sequence is MHTLEMLLLVLLLVPLAPG. The propeptide occupies 20–52; it reads EGDGQAVGGDRNPSEARRAYKRLLQRPARRMDR. Disulfide bonds link cysteine 55–cysteine 64, cysteine 58–cysteine 70, and cysteine 63–cysteine 84.

The protein belongs to the conotoxin Q superfamily. As to expression, expressed by the venom duct.

The protein resides in the secreted. This Conus caracteristicus (Characteristic cone) protein is Conotoxin Ca6.2.